The primary structure comprises 158 residues: uncharacterized protein (158 aa).

2 consecutive transmembrane segments (helical) span residues 10–30 and 40–60; these read LFFI…LNHF and YITF…NFFL.

Its subcellular location is the membrane. This is an uncharacterized protein from Schizosaccharomyces pombe (strain 972 / ATCC 24843) (Fission yeast).